The following is a 178-amino-acid chain: Interleukin-10 (178 aa).

Positions 1–18 (MHSSALLCCLVVLTGVRA) are cleaved as a signal peptide. Intrachain disulfides connect cysteine 30–cysteine 126 and cysteine 80–cysteine 132. Asparagine 134 is a glycosylation site (N-linked (GlcNAc...) asparagine).

Belongs to the IL-10 family. Homodimer. Interacts with IL10RA and IL10RB.

The protein localises to the secreted. Functionally, major immune regulatory cytokine that acts on many cells of the immune system where it has profound anti-inflammatory functions, limiting excessive tissue disruption caused by inflammation. Mechanistically, IL10 binds to its heterotetrameric receptor comprising IL10RA and IL10RB leading to JAK1 and STAT2-mediated phosphorylation of STAT3. In turn, STAT3 translocates to the nucleus where it drives expression of anti-inflammatory mediators. Targets antigen-presenting cells (APCs) such as macrophages and monocytes and inhibits their release of pro-inflammatory cytokines including granulocyte-macrophage colony-stimulating factor /GM-CSF, granulocyte colony-stimulating factor/G-CSF, IL-1 alpha, IL-1 beta, IL-6, IL-8 and TNF-alpha. Also interferes with antigen presentation by reducing the expression of MHC-class II and co-stimulatory molecules, thereby inhibiting their ability to induce T cell activation. In addition, controls the inflammatory response of macrophages by reprogramming essential metabolic pathways including mTOR signaling. This chain is Interleukin-10 (IL10), found in Papio hamadryas (Hamadryas baboon).